Here is a 242-residue protein sequence, read N- to C-terminus: MVPSLLNLPFAELEVGQHLYWQIGNLNLHGQVFLSSWVVIGLLLLLVVSGTRKMERDPKGVQNLLEYLWDYLRELAREQIGEKAYRDWLPFVGTLFLFIFVCNWGGALIPWRLVELPNGELGAPTADINTTVAMALLVSLSYFYAGLSRKGLRYFEYYVEPTPIMLPFKIIEDFTKPLSLSFRLFGNILADELVVAVLAFLVPVLVPLPAMFLGLFTSAIQALIFATLAANYIGEAVHEEAH.

A run of 5 helical transmembrane segments spans residues 28-48 (LHGQ…LLVV), 89-109 (LPFV…GALI), 128-148 (INTT…AGLS), 193-213 (LVVA…AMFL), and 214-234 (GLFT…NYIG).

The protein belongs to the ATPase A chain family. As to quaternary structure, F-type ATPases have 2 components, CF(1) - the catalytic core - and CF(0) - the membrane proton channel. CF(1) has five subunits: alpha(3), beta(3), gamma(1), delta(1), epsilon(1). CF(0) has four main subunits: a, b, b' and c.

The protein resides in the cellular thylakoid membrane. In terms of biological role, key component of the proton channel; it plays a direct role in the translocation of protons across the membrane. The sequence is that of ATP synthase subunit a from Synechococcus sp. (strain WH7803).